Reading from the N-terminus, the 338-residue chain is Ketol-acid reductoisomerase (NADP(+)) (338 aa).

Residues 1–181 (MKVFYDKDAD…GGGRAGIIET (181 aa)) form the KARI N-terminal Rossmann domain. NADP(+) contacts are provided by residues 24–27 (YGSQ), Arg47, and Ser52. His107 is a catalytic residue. Gly133 is an NADP(+) binding site. Positions 182 to 327 (NFREETETDL…AKLRAMMPWI (146 aa)) constitute a KARI C-terminal knotted domain. 4 residues coordinate Mg(2+): Asp190, Glu194, Glu226, and Glu230. Ser251 contacts substrate.

It belongs to the ketol-acid reductoisomerase family. Requires Mg(2+) as cofactor.

The enzyme catalyses (2R)-2,3-dihydroxy-3-methylbutanoate + NADP(+) = (2S)-2-acetolactate + NADPH + H(+). It carries out the reaction (2R,3R)-2,3-dihydroxy-3-methylpentanoate + NADP(+) = (S)-2-ethyl-2-hydroxy-3-oxobutanoate + NADPH + H(+). Its pathway is amino-acid biosynthesis; L-isoleucine biosynthesis; L-isoleucine from 2-oxobutanoate: step 2/4. It participates in amino-acid biosynthesis; L-valine biosynthesis; L-valine from pyruvate: step 2/4. Its function is as follows. Involved in the biosynthesis of branched-chain amino acids (BCAA). Catalyzes an alkyl-migration followed by a ketol-acid reduction of (S)-2-acetolactate (S2AL) to yield (R)-2,3-dihydroxy-isovalerate. In the isomerase reaction, S2AL is rearranged via a Mg-dependent methyl migration to produce 3-hydroxy-3-methyl-2-ketobutyrate (HMKB). In the reductase reaction, this 2-ketoacid undergoes a metal-dependent reduction by NADPH to yield (R)-2,3-dihydroxy-isovalerate. This Ralstonia pickettii (strain 12J) protein is Ketol-acid reductoisomerase (NADP(+)).